Consider the following 248-residue polypeptide: (2S)-[(R)-hydroxy(phenyl)methyl]succinyl-CoA dehydrogenase subunit BbsD (248 aa).

NAD(+)-binding residues include S15, D36, D62, I63, N89, Y153, and K157. Catalysis depends on Y153, which acts as the Proton acceptor.

The protein belongs to the short-chain dehydrogenases/reductases (SDR) family. Heterotetramer composed of 2 inactive BbsC subunits and 2 active BbsD subunits.

It carries out the reaction (2S)-[(R)-hydroxy(phenyl)methyl]succinyl-CoA + NAD(+) = (S)-2-benzoylsuccinyl-CoA + NADH + H(+). It functions in the pathway xenobiotic degradation; toluene degradation. Activity is probably regulated by the inactive BbsC subunit. Its function is as follows. Involved in an anaerobic toluene degradation pathway. Active subunit that catalyzes the oxidation of 2-(alpha-hydroxybenzyl)succinyl-CoA to 2-benzoylsuccinyl-CoA. In vitro, can catalyze the NADH-dependent reduction of the artificial substrates 2,2-dichloroacetophene and 2,4'-dichloroacetophenone. This chain is (2S)-[(R)-hydroxy(phenyl)methyl]succinyl-CoA dehydrogenase subunit BbsD, found in Thauera aromatica.